A 290-amino-acid polypeptide reads, in one-letter code: Phosphoribulokinase (290 aa).

Residue 12-20 (GSSGAGTTS) coordinates ATP.

The protein belongs to the phosphoribulokinase family.

It carries out the reaction D-ribulose 5-phosphate + ATP = D-ribulose 1,5-bisphosphate + ADP + H(+). Its pathway is carbohydrate biosynthesis; Calvin cycle. This Nitrobacter vulgaris protein is Phosphoribulokinase (cbbP).